A 193-amino-acid chain; its full sequence is MEQHFLGCVKRAWDSAEVAPEPQPPPIVSSEDRGPWPLPLYPVLGEYSLDSCDLGLLSSPCWRLPGVYWQNGLSPGVQSTLEPSTAKPTEFSWPGTQKQQEAPVEEVGQAEEPDRLRLQQLPWSSPLHPWDRQQDTEVCDSGCLLERRHPPALQPWRHLPGFSDCLEWILRVGFAAFSVLWACCSRICGAKQP.

Positions 78–87 are enriched in polar residues; the sequence is QSTLEPSTAK. A disordered region spans residues 78–111; the sequence is QSTLEPSTAKPTEFSWPGTQKQQEAPVEEVGQAE.

In terms of tissue distribution, widely expressed. Highly expressed in lymphocytes. Expressed in both resting CD4(+) and CD8(+) T-cells.

Functionally, may act as a receptor for annexin II on marrow stromal cells to induce osteoclast formation. The sequence is that of Annexin-2 receptor (ANXA2R) from Homo sapiens (Human).